The following is a 1946-amino-acid chain: Sickle tail protein (1946 aa).

Disordered regions lie at residues 1–83 (MEES…GMQP) and 113–176 (ERLR…VRSA). Positions 18-36 (DSRQMPQQGRSNLHVTSQE) are enriched in polar residues. The span at 38–47 (AACRRPRERL) shows a compositional bias: basic and acidic residues. Ser169 is subject to Phosphoserine. Phosphotyrosine is present on Tyr244. Disordered stretches follow at residues 305–324 (HPPHVIPNSPPSTPVPHSLP) and 339–374 (AIPGNATIPRDRLSSLPVSRSISPSPSAILERRDVK). The segment covering 308–324 (HVIPNSPPSTPVPHSLP) has biased composition (pro residues). A compositionally biased stretch (low complexity) spans 352-367 (SSLPVSRSISPSPSAI). The O-linked (GlcNAc) serine glycan is linked to Ser357. Phosphoserine is present on residues Ser361 and Ser365. Tyr393 carries the post-translational modification Phosphotyrosine. Positions 455–512 (SRKYPDSHLPTLGSKTPPASPHRVGDLRMIDLHPHLNTHGPPHTLQPDRASPSRQSFK) are disordered. At Thr470 the chain carries Phosphothreonine. Residue Ser474 is modified to Phosphoserine. Over residues 477 to 488 (RVGDLRMIDLHP) the composition is skewed to basic and acidic residues. Coiled coils occupy residues 557 to 581 (RETRERMQAMEKQIASLTGLVQSAL) and 644 to 685 (TSLL…ELEI). Residue Ser809 is modified to Phosphoserine. Disordered stretches follow at residues 853–875 (EETAHAPGQPLHCSTGSPGDVKS) and 891–947 (SPVV…PVNG). Polar residues-rich tracts occupy residues 891–909 (SPVVMQPSQHSSALMNPAQ) and 927–947 (QEVTSAQSAPGPQSPQTPVNG). Residues 962–990 (SAKNRAVSIEKAEKKWEEKRQNLEHYNGK) are a coiled coil. Residues 1008–1221 (PNLEMPPASS…LRPSGPPKWE (214 aa)) are disordered. Ser1032, Ser1035, Ser1038, and Ser1049 each carry phosphoserine. Residues 1049-1058 (SPPPPPPPPR) are compositionally biased toward pro residues. A compositionally biased stretch (polar residues) spans 1151-1162 (NPNSHAEQSRAN). Basic and acidic residues predominate over residues 1176–1194 (PKEKKNLEFYHEDVRKSDV). The residue at position 1466 (Ser1466) is a Phosphoserine. The stretch at 1469-1495 (FEECDEELERMLTEEKIEEEEEDENED) forms a coiled coil. 3 disordered regions span residues 1482–1567 (EEKI…VDDQ), 1622–1664 (AKRF…RKST), and 1691–1946 (VDTS…KETS). Residues 1484-1495 (KIEEEEEDENED) are compositionally biased toward acidic residues. Positions 1498–1508 (VRTSSQMSCEQ) are enriched in polar residues. Basic and acidic residues-rich tracts occupy residues 1509–1518 (VDSRSDRMGQ) and 1622–1644 (AKRFEITRSQPEDALKTMARRQE). A coiled-coil region spans residues 1659 to 1688 (EIRKSTYRTLDSLEQTIKQLENTISEMSPR). A compositionally biased stretch (polar residues) spans 1739-1759 (KGSSTTPQTSRMPVPMTSKNR). Ser1741 carries the post-translational modification Phosphoserine. The segment covering 1765–1777 (KASKQSKLQDPRQ) has biased composition (basic and acidic residues). The segment covering 1806-1825 (ALSPSSGKSSSLPSASGDSS) has biased composition (low complexity). Residue Ser1843 is modified to Phosphoserine. Polar residues predominate over residues 1851–1866 (HSASLIPSVSNGSLKF). The span at 1890 to 1899 (AAPTTSSSSS) shows a compositional bias: low complexity. Phosphoserine occurs at positions 1899, 1902, and 1905. Positions 1920–1946 (HTPSLASYKAQNGSSSKATPSTAKETS) are enriched in polar residues.

As to quaternary structure, interacts with CPNE4 (via VWFA domain). In terms of tissue distribution, expressed predominantly in the notochord and mesonephros during embryogenesis as well as in other areas such as the epithalamus sulcus, lens vesicle, inner retinal layer, heart, hepatic primordial surface, infundibulum, surface ectoderm, hind gut and limb bud mesenchyme. In adults, expressed in a range of tissues including the nucleus pulposus, corpus callosum, kidney, cardiac muscle, Sertoli cells and hair follicles.

Its subcellular location is the cytoplasm. The protein resides in the cytoskeleton. It localises to the microtubule organizing center. The protein localises to the centrosome. In terms of biological role, required for normal development of intervertebral disks. The chain is Sickle tail protein from Mus musculus (Mouse).